The primary structure comprises 167 residues: NAD(P)H-quinone oxidoreductase subunit I, chloroplastic (167 aa).

4Fe-4S ferredoxin-type domains follow at residues 55–84 and 95–124; these read GRIH…VDWI and KNYS…MTEE. The [4Fe-4S] cluster site is built by cysteine 64, cysteine 67, cysteine 70, cysteine 74, cysteine 104, cysteine 107, cysteine 110, and cysteine 114.

This sequence belongs to the complex I 23 kDa subunit family. NDH is composed of at least 16 different subunits, 5 of which are encoded in the nucleus. [4Fe-4S] cluster is required as a cofactor.

It is found in the plastid. The protein resides in the chloroplast thylakoid membrane. The enzyme catalyses a plastoquinone + NADH + (n+1) H(+)(in) = a plastoquinol + NAD(+) + n H(+)(out). It catalyses the reaction a plastoquinone + NADPH + (n+1) H(+)(in) = a plastoquinol + NADP(+) + n H(+)(out). Its function is as follows. NDH shuttles electrons from NAD(P)H:plastoquinone, via FMN and iron-sulfur (Fe-S) centers, to quinones in the photosynthetic chain and possibly in a chloroplast respiratory chain. The immediate electron acceptor for the enzyme in this species is believed to be plastoquinone. Couples the redox reaction to proton translocation, and thus conserves the redox energy in a proton gradient. In Adiantum capillus-veneris (Maidenhair fern), this protein is NAD(P)H-quinone oxidoreductase subunit I, chloroplastic.